Consider the following 518-residue polypeptide: Glucan 1,4-alpha-maltohexaosidase (518 aa).

Residues 1–33 form the signal peptide; it reads MKMRTGKKGFLSILLAFLLVITSIPFTLVDVEA. Residues Asn-139, Asp-196, Ala-219, Asp-221, Asp-232, Asp-238, Asp-240, and Asp-242 each contribute to the Ca(2+) site. Na(+) is bound at residue Asp-196. Positions 221, 232, and 238 each coordinate Na(+). Catalysis depends on Asp-269, which acts as the Nucleophile. Ca(2+) is bound at residue His-273. Glu-299 serves as the catalytic Proton donor.

This sequence belongs to the glycosyl hydrolase 13 family. Ca(2+) is required as a cofactor. It depends on Na(+) as a cofactor.

The protein resides in the secreted. The enzyme catalyses Hydrolysis of (1-&gt;4)-alpha-D-glucosidic linkages in amylaceous polysaccharides, to remove successive maltohexaose residues from the non-reducing chain ends.. It functions in the pathway glycan degradation; starch degradation. In Bacillus sp. (strain 707), this protein is Glucan 1,4-alpha-maltohexaosidase.